A 141-amino-acid polypeptide reads, in one-letter code: Nucleoside triphosphatase NudI (141 aa).

Residues 1-141 (MRQRTIVCPL…RKTLRLKGLL (141 aa)) form the Nudix hydrolase domain. A Nudix box motif is present at residues 38–59 (GGVEPGERIEEALRREIREELG).

Belongs to the Nudix hydrolase family. NudI subfamily. As to quaternary structure, monomer. Mg(2+) is required as a cofactor.

It carries out the reaction a ribonucleoside 5'-triphosphate + H2O = a ribonucleoside 5'-phosphate + diphosphate + H(+). It catalyses the reaction a 2'-deoxyribonucleoside 5'-triphosphate + H2O = a 2'-deoxyribonucleoside 5'-phosphate + diphosphate + H(+). The catalysed reaction is dUTP + H2O = dUMP + diphosphate + H(+). The enzyme catalyses dTTP + H2O = dTMP + diphosphate + H(+). It carries out the reaction dCTP + H2O = dCMP + diphosphate + H(+). Functionally, catalyzes the hydrolysis of nucleoside triphosphates, with a preference for pyrimidine deoxynucleoside triphosphates (dUTP, dTTP and dCTP). The chain is Nucleoside triphosphatase NudI from Escherichia coli O6:K15:H31 (strain 536 / UPEC).